Consider the following 387-residue polypeptide: Acetylserotonin O-methyltransferase (387 aa).

Residues Tyr153, Trp170, Glu216, 246 to 248 (GDF), and Arg263 each bind S-adenosyl-L-methionine. His266 serves as the catalytic Proton donor/acceptor. 2 residues coordinate substrate: Asp267 and Gln317. Residues 354 to 387 (AARGGGAGARSDGGGGDATSQTGSGTGSEVGAQD) form a disordered region. Residues 356-370 (RGGGAGARSDGGGGD) show a composition bias toward gly residues.

This sequence belongs to the class I-like SAM-binding methyltransferase superfamily. Cation-independent O-methyltransferase family. As to quaternary structure, homodimer. In terms of tissue distribution, expressed predominantly in the pineal gland (at protein level). Very low expression, if any, in the retina.

It catalyses the reaction N-acetylserotonin + S-adenosyl-L-methionine = melatonin + S-adenosyl-L-homocysteine + H(+). The protein operates within aromatic compound metabolism; melatonin biosynthesis; melatonin from serotonin: step 1/2. Functionally, catalyzes the transfer of a methyl group onto N-acetylserotonin, producing melatonin (N-acetyl-5-methoxytryptamine). This chain is Acetylserotonin O-methyltransferase (Asmt), found in Mus musculus (Mouse).